The chain runs to 404 residues: Cysteine desulfurase IscS (404 aa).

Residues 75–76 (AT), Asn-155, Gln-183, and 203–205 (SAH) each bind pyridoxal 5'-phosphate. Lys-206 carries the N6-(pyridoxal phosphate)lysine modification. Pyridoxal 5'-phosphate is bound at residue Thr-243. The active-site Cysteine persulfide intermediate is the Cys-328. Cys-328 provides a ligand contact to [2Fe-2S] cluster.

Belongs to the class-V pyridoxal-phosphate-dependent aminotransferase family. NifS/IscS subfamily. Homodimer. Forms a heterotetramer with IscU, interacts with other sulfur acceptors. Pyridoxal 5'-phosphate is required as a cofactor.

It is found in the cytoplasm. It carries out the reaction (sulfur carrier)-H + L-cysteine = (sulfur carrier)-SH + L-alanine. Its pathway is cofactor biosynthesis; iron-sulfur cluster biosynthesis. Its function is as follows. Master enzyme that delivers sulfur to a number of partners involved in Fe-S cluster assembly, tRNA modification or cofactor biosynthesis. Catalyzes the removal of elemental sulfur atoms from cysteine to produce alanine. Functions as a sulfur delivery protein for Fe-S cluster synthesis onto IscU, an Fe-S scaffold assembly protein, as well as other S acceptor proteins. This is Cysteine desulfurase IscS from Neisseria meningitidis serogroup C (strain 053442).